The primary structure comprises 292 residues: Pyridoxal 5'-phosphate synthase subunit PdxS (292 aa).

A D-ribose 5-phosphate-binding site is contributed by Asp22. Lys79 functions as the Schiff-base intermediate with D-ribose 5-phosphate in the catalytic mechanism. Gly151 provides a ligand contact to D-ribose 5-phosphate. Position 163 (Arg163) interacts with D-glyceraldehyde 3-phosphate. D-ribose 5-phosphate contacts are provided by residues Gly212 and 233 to 234 (GS).

It belongs to the PdxS/SNZ family. In the presence of PdxT, forms a dodecamer of heterodimers.

It catalyses the reaction aldehydo-D-ribose 5-phosphate + D-glyceraldehyde 3-phosphate + L-glutamine = pyridoxal 5'-phosphate + L-glutamate + phosphate + 3 H2O + H(+). The protein operates within cofactor biosynthesis; pyridoxal 5'-phosphate biosynthesis. In terms of biological role, catalyzes the formation of pyridoxal 5'-phosphate from ribose 5-phosphate (RBP), glyceraldehyde 3-phosphate (G3P) and ammonia. The ammonia is provided by the PdxT subunit. Can also use ribulose 5-phosphate and dihydroxyacetone phosphate as substrates, resulting from enzyme-catalyzed isomerization of RBP and G3P, respectively. This is Pyridoxal 5'-phosphate synthase subunit PdxS from Thermoanaerobacter sp. (strain X514).